A 58-amino-acid chain; its full sequence is uncharacterized protein (58 aa).

The chain crosses the membrane as a helical span at residues 12–32 (VMTLLITISILIVLAVLLVTI).

The protein localises to the cell membrane. This is an uncharacterized protein from Bacillus subtilis (strain 168).